Consider the following 334-residue polypeptide: Adenine deaminase (334 aa).

The Zn(2+) site is built by His14, His16, and His194. The active-site Proton donor is the Glu197. Asp275 provides a ligand contact to Zn(2+). A substrate-binding site is contributed by Asp276.

It belongs to the metallo-dependent hydrolases superfamily. Adenosine and AMP deaminases family. Adenine deaminase type 2 subfamily. Zn(2+) serves as cofactor.

It carries out the reaction adenine + H2O + H(+) = hypoxanthine + NH4(+). In terms of biological role, catalyzes the hydrolytic deamination of adenine to hypoxanthine. Plays an important role in the purine salvage pathway and in nitrogen catabolism. In Hahella chejuensis (strain KCTC 2396), this protein is Adenine deaminase.